Here is a 100-residue protein sequence, read N- to C-terminus: Sec-independent protein translocase protein TatA (100 aa).

A helical transmembrane segment spans residues 1 to 21 (MGALKPWHIAVLVVVLILLFG). Positions 44–55 (KSLHDDDRDLAE) are enriched in basic and acidic residues. Residues 44 to 100 (KSLHDDDRDLAEKANAQAGYQPLPPQVQQEPYPQQTPYQAPPQQQPVVDPVQRARDS) form a disordered region. Residues 69-81 (QVQQEPYPQQTPY) are compositionally biased toward low complexity.

The protein belongs to the TatA/E family. As to quaternary structure, the Tat system comprises two distinct complexes: a TatABC complex, containing multiple copies of TatA, TatB and TatC subunits, and a separate TatA complex, containing only TatA subunits. Substrates initially bind to the TatABC complex, which probably triggers association of the separate TatA complex to form the active translocon.

It is found in the cell membrane. Functionally, part of the twin-arginine translocation (Tat) system that transports large folded proteins containing a characteristic twin-arginine motif in their signal peptide across membranes. TatA could form the protein-conducting channel of the Tat system. This Salinispora arenicola (strain CNS-205) protein is Sec-independent protein translocase protein TatA.